Here is a 109-residue protein sequence, read N- to C-terminus: U3-lycotoxin-Ls1x (109 aa).

Positions 1–20 (MKFVLLFGVLLVTLFSYSSA) are cleaved as a signal peptide. The propeptide occupies 21-44 (EMLDDFDQADEDELLSLIEKEEAR). Disulfide bonds link cysteine 48/cysteine 63, cysteine 55/cysteine 72, cysteine 62/cysteine 88, and cysteine 74/cysteine 86.

It belongs to the neurotoxin 19 (CSTX) family. 01 subfamily. As to expression, expressed by the venom gland.

Its subcellular location is the secreted. The chain is U3-lycotoxin-Ls1x from Lycosa singoriensis (Wolf spider).